A 374-amino-acid polypeptide reads, in one-letter code: DNA-directed RNA polymerase subunit alpha (374 aa).

Residues 1–257 are alpha N-terminal domain (alpha-NTD); sequence MSDNAHNLLY…KHFSIFENMD (257 aa). Residues 274-374 form an alpha C-terminal domain (alpha-CTD) region; it reads KDDILHKLIL…EKIRAKNIKG (101 aa).

The protein belongs to the RNA polymerase alpha chain family. In terms of assembly, homodimer. The RNAP catalytic core consists of 2 alpha, 1 beta, 1 beta' and 1 omega subunit. When a sigma factor is associated with the core the holoenzyme is formed, which can initiate transcription.

The catalysed reaction is RNA(n) + a ribonucleoside 5'-triphosphate = RNA(n+1) + diphosphate. DNA-dependent RNA polymerase catalyzes the transcription of DNA into RNA using the four ribonucleoside triphosphates as substrates. The polypeptide is DNA-directed RNA polymerase subunit alpha (Chlamydia pneumoniae (Chlamydophila pneumoniae)).